Consider the following 382-residue polypeptide: Gibberellin 2-beta-dioxygenase 1 (382 aa).

A Fe2OG dioxygenase domain is found at 189 to 321 (DSDCLLRINH…RLSTIYFASP (133 aa)). Tyrosine 199 lines the 2-oxoglutarate pocket. Fe cation contacts are provided by histidine 241, aspartate 243, and histidine 302. Residues arginine 312 and serine 314 each coordinate 2-oxoglutarate.

Belongs to the iron/ascorbate-dependent oxidoreductase family. GA2OX subfamily. L-ascorbate serves as cofactor. It depends on Fe(2+) as a cofactor. In terms of tissue distribution, expressed in roots, shoot apex, and in the basal region of leaf primordia and young leaves.

It catalyses the reaction gibberellin A1 + 2-oxoglutarate + O2 = gibberellin A8 + succinate + CO2. Functionally, catalyzes the 2-beta-hydroxylation of several biologically active gibberellins, leading to the homeostatic regulation of their endogenous level. Catabolism of gibberellins (GAs) plays a central role in plant development. Controls the level of bioactive GAs in the shoot apical meristem, which regulates the vegetative to reproductive phase transition. In vitro, converts GA1, GA4, GA9, GA20, and GA44 to the corresponding 2-beta-hydroxylated products GA8, GA34, GA51, GA29, and GA98, respectively. The protein is Gibberellin 2-beta-dioxygenase 1 of Oryza sativa subsp. japonica (Rice).